We begin with the raw amino-acid sequence, 462 residues long: Proteases secretion protein PrtF (462 aa).

A signal peptide spans 1–23 (MRRKAVLLTVVLSLSGGSAQAMG).

It belongs to the outer membrane factor (OMF) (TC 1.B.17) family.

The protein localises to the cell outer membrane. Its function is as follows. Involved in the secretion of proteases A, B, C and G. This is Proteases secretion protein PrtF (prtF) from Dickeya chrysanthemi (Pectobacterium chrysanthemi).